The following is a 433-amino-acid chain: Putative purine permease YbbY (433 aa).

The Periplasmic segment spans residues 1–17; the sequence is MFNFAVSRESLLSGFQW. A helical transmembrane segment spans residues 18–38; that stretch reads FFFIFCNTVVVPPTLLSAFQL. Over 39–42 the chain is Cytoplasmic; the sequence is PQSS. Residues 43–63 traverse the membrane as a helical segment; sequence LLTLTQYAFLATALACFAQAF. Residues 64–68 lie on the Periplasmic side of the membrane; the sequence is CGHRR. The chain crosses the membrane as a helical span at residues 69 to 89; it reads AIMEGPGGLWWGTILTITLGE. Residues 90–102 are Cytoplasmic-facing; sequence ASRGTPINDIATS. Residues 103 to 123 form a helical membrane-spanning segment; the sequence is LAVGIALSGVLTMLIGFSGLG. Residues 124 to 130 are Periplasmic-facing; the sequence is HRLARLF. Residues 131–151 traverse the membrane as a helical segment; the sequence is TPSVMVLFMLMLGAQLTTIFF. The Cytoplasmic segment spans residues 152 to 169; that stretch reads KGMLGLPFGIADPNFKIQ. A helical membrane pass occupies residues 170–190; the sequence is LPPFALSVAVMCLVLAMIIFL. At 191–196 the chain is on the periplasmic side; the sequence is PQRFAR. The chain crosses the membrane as a helical span at residues 197 to 217; the sequence is YGLLVGTITGWLLWYFCFPSS. Residues 218 to 230 are Cytoplasmic-facing; it reads HSLSGELHWQWFP. Residues 231-251 traverse the membrane as a helical segment; that stretch reads LGSGGALSPGIILTAVITGLV. Topologically, residues 252 to 288 are periplasmic; sequence NISNTYGAIRGTDVFYPQQGAGNTRYRRSFVATGFMT. Residues 289–309 form a helical membrane-spanning segment; sequence LITVPLAVIPFSPFVSSIGLL. Residues 310 to 319 lie on the Cytoplasmic side of the membrane; that stretch reads TQTGDYTRRS. Residues 320-340 traverse the membrane as a helical segment; the sequence is FIYGSVICLLVALVPALTRLF. Over 341-345 the chain is Periplasmic; it reads CSIPL. A helical transmembrane segment spans residues 346-366; it reads PVSSAVMLVSYLPLLFSALVF. Residues 367-379 are Cytoplasmic-facing; the sequence is SQQITFTARNIYR. Residues 380–400 traverse the membrane as a helical segment; that stretch reads LALPLFVGIFLMALPPVYLQD. Residues 401-407 are Periplasmic-facing; sequence LPLTLRP. A helical membrane pass occupies residues 408 to 428; sequence LLSNGLLVGILLAVLMDNLIP. Residues 429–433 are Cytoplasmic-facing; it reads WERIE.

The protein belongs to the nucleobase:cation symporter-2 (NCS2) (TC 2.A.40) family.

It localises to the cell inner membrane. The polypeptide is Putative purine permease YbbY (ybbY) (Escherichia coli (strain K12)).